The primary structure comprises 209 residues: MNQKPPPYGYGGAGGGGVGPSSTSNTTIIGTLSARAKQTTQSMITTLRPWREILDLSALSLPRGYDEAMAHLKHNISYFRGNYALAVLAIVFLGLIYHPMSMIAFIVVFIGWILLYFSRDANDSIVISGKEVDDKIVLVLLSLVTVLALVYTDVGENVLVSLIIGLLIVGAHGAFRNTDDLFLDEESARRGGLVSAGSGNRPPSSYTPI.

A disordered region spans residues M1–P20. Gly residues predominate over residues G9–G19. 3 helical membrane-spanning segments follow: residues I90–I110, V132–T152, and G155–F175.

This sequence belongs to the PRA1 family. As to quaternary structure, interacts with PRA1B1, PRA1B2, PRA1B3, PRA1B4, PRA1B5 and PRA1B6. As to expression, expressed in hypocotyls, roots, lateral roots, columella cells, leaves and shoot apex.

It localises to the endosome membrane. Its function is as follows. May be involved in both secretory and endocytic intracellular trafficking in the endosomal/prevacuolar compartments. This is PRA1 family protein E (PRA1E) from Arabidopsis thaliana (Mouse-ear cress).